Here is a 171-residue protein sequence, read N- to C-terminus: S-ribosylhomocysteine lyase (171 aa).

Residues H54, H58, and C128 each coordinate Fe cation.

The protein belongs to the LuxS family. In terms of assembly, homodimer. Fe cation is required as a cofactor.

The catalysed reaction is S-(5-deoxy-D-ribos-5-yl)-L-homocysteine = (S)-4,5-dihydroxypentane-2,3-dione + L-homocysteine. Its function is as follows. Involved in the synthesis of autoinducer 2 (AI-2) which is secreted by bacteria and is used to communicate both the cell density and the metabolic potential of the environment. The regulation of gene expression in response to changes in cell density is called quorum sensing. Catalyzes the transformation of S-ribosylhomocysteine (RHC) to homocysteine (HC) and 4,5-dihydroxy-2,3-pentadione (DPD). The protein is S-ribosylhomocysteine lyase of Escherichia coli (strain 55989 / EAEC).